The primary structure comprises 612 residues: Peroxisomal targeting signal receptor (612 aa).

N-acetylmethionine is present on Met1. Residues 1-24 (MDVGSCSVGNNPLAQLHKHTQQNK) form a disordered region. A Glycyl cysteine thioester (Cys-Gly) (interchain with G-Cter in ubiquitin) cross-link involves residue Cys6. Positions 7-29 (SVGNNPLAQLHKHTQQNKSLQFN) are amphipathic helix 1 (AH1). Residues Lys18 and Lys24 each participate in a glycyl lysine isopeptide (Lys-Gly) (interchain with G-Cter in ubiquitin) cross-link. A Phosphoserine modification is found at Ser61. One copy of the TPR 1 repeat lies at 64-97 (NMANMQRFINGEPLIDDKRRMEIGPSSGRLPPFS). Residues 70-104 (RFINGEPLIDDKRRMEIGPSSGRLPPFSNVHSLQT) are amphipathic helix 2 (AH2). The WxxxF/Y motif 1 motif lies at 120-124 (WSQEF). The tract at residues 129–151 (SIQNRNADTGNSEKAWQRGSTTA) is disordered. The amphipathic helix 3 (AH3) stretch occupies residues 158 to 174 (PNTMMNNYAYASMNSLS). Positions 182 to 202 (AFMNQQQSGRSKEGVNEQEQQ) are disordered. The WxxxF/Y motif 2 signature appears at 204-208 (WTDQF). The tract at residues 257–273 (FQEVWDSIHKDAEEVLP) is amphipathic helix 4 (AH4). TPR repeat units follow at residues 313–346 (PNAY…KPDH), 347–380 (VDAW…DPKN), 381–418 (LEAM…IWSR), 419–456 (IKQQ…STID), 457–490 (PEIQ…NPND), 491–524 (ELMW…KPSF), and 525–558 (VRAR…HEVN).

It belongs to the peroxisomal targeting signal receptor family. In terms of assembly, interacts (via WxxxF/Y and LVxEF motifs) with PEX14; promoting translocation through the PEX13-PEX14 docking complex. In terms of processing, monoubiquitinated at Cys-6 by PEX2 during PEX5 passage through the retrotranslocation channel: monoubiquitination acts as a signal for PEX5 extraction and is required for proper export from peroxisomes and recycling. Ubiquitination at Cys-6 is UBC4-independent but requires the presence of PEX4. When PEX5 recycling is compromised, polyubiquitinated at Lys-18 and Lys-24 by PEX10 during its passage through the retrotranslocation channel, leading to its degradation. Ubiquitination at Lys-18 and Lys-24 are UBC4-dependent. Monoubiquitination at Cys-6 and polyubiquitination at Lys-18 and Lys-24 are removed by UBP15 in the cytosol, resetting PEX5 for a subsequent import cycle.

The protein resides in the cytoplasm. The protein localises to the cytosol. It localises to the peroxisome matrix. Its function is as follows. Receptor that mediates peroxisomal import of proteins containing a C-terminal PTS1-type tripeptide peroxisomal targeting signal (SKL-type). Binds to cargo proteins containing a PTS1 peroxisomal targeting signal in the cytosol, and translocates them into the peroxisome matrix by passing through the PEX13-PEX14 docking complex along with cargo proteins. PEX5 receptor is then retrotranslocated into the cytosol, leading to release of bound cargo in the peroxisome matrix, and reset for a subsequent peroxisome import cycle. The sequence is that of Peroxisomal targeting signal receptor from Saccharomyces cerevisiae (strain ATCC 204508 / S288c) (Baker's yeast).